The primary structure comprises 91 residues: DNA-directed RNA polymerase subunit omega (91 aa).

The protein belongs to the RNA polymerase subunit omega family. As to quaternary structure, the RNAP catalytic core consists of 2 alpha, 1 beta, 1 beta' and 1 omega subunit. When a sigma factor is associated with the core the holoenzyme is formed, which can initiate transcription.

The catalysed reaction is RNA(n) + a ribonucleoside 5'-triphosphate = RNA(n+1) + diphosphate. Promotes RNA polymerase assembly. Latches the N- and C-terminal regions of the beta' subunit thereby facilitating its interaction with the beta and alpha subunits. This Yersinia pestis bv. Antiqua (strain Antiqua) protein is DNA-directed RNA polymerase subunit omega.